Consider the following 244-residue polypeptide: tRNA pseudouridine synthase A (244 aa).

Asp-52 functions as the Nucleophile in the catalytic mechanism. Substrate is bound at residue Tyr-110.

The protein belongs to the tRNA pseudouridine synthase TruA family. Homodimer.

The enzyme catalyses uridine(38/39/40) in tRNA = pseudouridine(38/39/40) in tRNA. Functionally, formation of pseudouridine at positions 38, 39 and 40 in the anticodon stem and loop of transfer RNAs. The sequence is that of tRNA pseudouridine synthase A from Caldicellulosiruptor saccharolyticus (strain ATCC 43494 / DSM 8903 / Tp8T 6331).